The chain runs to 274 residues: 2,3,4,5-tetrahydropyridine-2,6-dicarboxylate N-succinyltransferase (274 aa).

Substrate-binding residues include Arg104 and Asp141.

Belongs to the transferase hexapeptide repeat family. In terms of assembly, homotrimer.

It localises to the cytoplasm. The catalysed reaction is (S)-2,3,4,5-tetrahydrodipicolinate + succinyl-CoA + H2O = (S)-2-succinylamino-6-oxoheptanedioate + CoA. It participates in amino-acid biosynthesis; L-lysine biosynthesis via DAP pathway; LL-2,6-diaminopimelate from (S)-tetrahydrodipicolinate (succinylase route): step 1/3. The protein is 2,3,4,5-tetrahydropyridine-2,6-dicarboxylate N-succinyltransferase of Salmonella choleraesuis (strain SC-B67).